We begin with the raw amino-acid sequence, 469 residues long: Trehalose-6-phosphate synthase (469 aa).

Residue arginine 10 coordinates D-glucose 6-phosphate. Glycine 22 to glycine 23 serves as a coordination point for UDP-alpha-D-glucose. Residues tyrosine 77 and aspartate 131 each contribute to the D-glucose 6-phosphate site. Positions 262 and 267 each coordinate UDP-alpha-D-glucose. Arginine 300 serves as a coordination point for D-glucose 6-phosphate. Leucine 365–glutamate 369 contacts UDP-alpha-D-glucose.

It belongs to the glycosyltransferase 20 family. Homotetramer.

The catalysed reaction is D-glucose 6-phosphate + UDP-alpha-D-glucose = alpha,alpha-trehalose 6-phosphate + UDP + H(+). The protein operates within glycan biosynthesis; trehalose biosynthesis. Its function is as follows. Probably involved in the osmoprotection via the biosynthesis of trehalose. Catalyzes the transfer of glucose from UDP-alpha-D-glucose (UDP-Glc) to D-glucose 6-phosphate (Glc-6-P) to form trehalose-6-phosphate. Acts with retention of the anomeric configuration of the UDP-sugar donor. This Sodalis glossinidius (strain morsitans) protein is Trehalose-6-phosphate synthase.